We begin with the raw amino-acid sequence, 209 residues long: NADH-ubiquinone oxidoreductase subunit 9 (209 aa).

It belongs to the complex I 30 kDa subunit family. As to quaternary structure, complex I is composed of about 45 different subunits.

The protein resides in the mitochondrion inner membrane. The catalysed reaction is a ubiquinone + NADH + 5 H(+)(in) = a ubiquinol + NAD(+) + 4 H(+)(out). Core subunit of the mitochondrial membrane respiratory chain NADH dehydrogenase (Complex I) that is believed to belong to the minimal assembly required for catalysis. Complex I functions in the transfer of electrons from NADH to the respiratory chain. The immediate electron acceptor for the enzyme is believed to be ubiquinone. The polypeptide is NADH-ubiquinone oxidoreductase subunit 9 (nad9) (Dictyostelium discoideum (Social amoeba)).